A 766-amino-acid chain; its full sequence is 5-methyltetrahydropteroyltriglutamate--homocysteine methyltransferase (766 aa).

5-methyltetrahydropteroyltri-L-glutamate contacts are provided by residues 16–19 and Lys119; that span reads RELK. L-homocysteine-binding positions include 440 to 442 and Glu493; that span reads IGS. Residues 440–442 and Glu493 each bind L-methionine; that span reads IGS. 5-methyltetrahydropteroyltri-L-glutamate is bound by residues 524–525 and Trp570; that span reads RC. Residue Asp608 coordinates L-homocysteine. Asp608 serves as a coordination point for L-methionine. Glu614 serves as a coordination point for 5-methyltetrahydropteroyltri-L-glutamate. His650, Cys652, and Glu674 together coordinate Zn(2+). Residue His703 is the Proton donor of the active site. Cys735 contacts Zn(2+).

Belongs to the vitamin-B12 independent methionine synthase family. It depends on Zn(2+) as a cofactor.

The catalysed reaction is 5-methyltetrahydropteroyltri-L-glutamate + L-homocysteine = tetrahydropteroyltri-L-glutamate + L-methionine. It participates in amino-acid biosynthesis; L-methionine biosynthesis via de novo pathway; L-methionine from L-homocysteine (MetE route): step 1/1. Catalyzes the transfer of a methyl group from 5-methyltetrahydrofolate to homocysteine resulting in methionine formation. This Pseudomonas aeruginosa (strain LESB58) protein is 5-methyltetrahydropteroyltriglutamate--homocysteine methyltransferase.